The chain runs to 117 residues: Ig heavy chain V region MOO (117 aa).

Positions 1–116 (EVKLVESGGD…FGQGTIVTVS (116 aa)) constitute an Ig-like domain.

The polypeptide is Ig heavy chain V region MOO (Canis lupus familiaris (Dog)).